The primary structure comprises 375 residues: Killer cell immunoglobulin-like receptor 2DL5B (375 aa).

The N-terminal stretch at 1–21 (MSLMVVSMACVGFFLLQGAWT) is a signal peptide. Over 22-238 (HEGGQDKPLL…PSSKTGIRRH (217 aa)) the chain is Extracellular. Ig-like C2-type domains are found at residues 42–102 (GGHV…HPRS) and 137–200 (GENV…LHDS). 2 cysteine pairs are disulfide-bonded: C49/C95 and C144/C193. The disordered stretch occupies residues 213–233 (VSVTGNSSSSSSSPTEPSSKT). N218 carries N-linked (GlcNAc...) asparagine glycosylation. Residues 219-231 (SSSSSSSPTEPSS) show a composition bias toward low complexity. A helical membrane pass occupies residues 239–259 (LHILIGTSVAIILFIILFFFL). At 260 to 375 (LHCCCSNKKN…ASSHVPAAGI (116 aa)) the chain is on the cytoplasmic side. Residues 334–375 (AKPRSLSPAHKHHSQALRGSSRETTALSQNRVASSHVPAAGI) are disordered. Residues 355-366 (RETTALSQNRVA) show a composition bias toward polar residues.

The protein belongs to the immunoglobulin superfamily.

It localises to the cell membrane. Its function is as follows. Receptor on natural killer (NK) cells for HLA-C alleles. Inhibits the activity of NK cells thus preventing cell lysis. This is Killer cell immunoglobulin-like receptor 2DL5B (KIR2DL5B) from Homo sapiens (Human).